The following is a 246-amino-acid chain: Ribonuclease PH (246 aa).

Residues R86 and 124 to 126 each bind phosphate; that span reads GTR.

The protein belongs to the RNase PH family. As to quaternary structure, homohexameric ring arranged as a trimer of dimers.

The enzyme catalyses tRNA(n+1) + phosphate = tRNA(n) + a ribonucleoside 5'-diphosphate. In terms of biological role, phosphorolytic 3'-5' exoribonuclease that plays an important role in tRNA 3'-end maturation. Removes nucleotide residues following the 3'-CCA terminus of tRNAs; can also add nucleotides to the ends of RNA molecules by using nucleoside diphosphates as substrates, but this may not be physiologically important. Probably plays a role in initiation of 16S rRNA degradation (leading to ribosome degradation) during starvation. This Bacillus licheniformis (strain ATCC 14580 / DSM 13 / JCM 2505 / CCUG 7422 / NBRC 12200 / NCIMB 9375 / NCTC 10341 / NRRL NRS-1264 / Gibson 46) protein is Ribonuclease PH.